A 214-amino-acid polypeptide reads, in one-letter code: Thiamine-phosphate synthase (214 aa).

Residues 40–44 (QLREK) and Asn-72 contribute to the 4-amino-2-methyl-5-(diphosphooxymethyl)pyrimidine site. Mg(2+) is bound by residues Asp-73 and Asp-92. Residue Ser-110 coordinates 4-amino-2-methyl-5-(diphosphooxymethyl)pyrimidine. Residue 137–139 (SPT) participates in 2-[(2R,5Z)-2-carboxy-4-methylthiazol-5(2H)-ylidene]ethyl phosphate binding. Lys-140 is a binding site for 4-amino-2-methyl-5-(diphosphooxymethyl)pyrimidine. Residues Gly-167 and 185–186 (IS) each bind 2-[(2R,5Z)-2-carboxy-4-methylthiazol-5(2H)-ylidene]ethyl phosphate.

It belongs to the thiamine-phosphate synthase family. Mg(2+) is required as a cofactor.

It catalyses the reaction 2-[(2R,5Z)-2-carboxy-4-methylthiazol-5(2H)-ylidene]ethyl phosphate + 4-amino-2-methyl-5-(diphosphooxymethyl)pyrimidine + 2 H(+) = thiamine phosphate + CO2 + diphosphate. The enzyme catalyses 2-(2-carboxy-4-methylthiazol-5-yl)ethyl phosphate + 4-amino-2-methyl-5-(diphosphooxymethyl)pyrimidine + 2 H(+) = thiamine phosphate + CO2 + diphosphate. It carries out the reaction 4-methyl-5-(2-phosphooxyethyl)-thiazole + 4-amino-2-methyl-5-(diphosphooxymethyl)pyrimidine + H(+) = thiamine phosphate + diphosphate. The protein operates within cofactor biosynthesis; thiamine diphosphate biosynthesis; thiamine phosphate from 4-amino-2-methyl-5-diphosphomethylpyrimidine and 4-methyl-5-(2-phosphoethyl)-thiazole: step 1/1. Its function is as follows. Condenses 4-methyl-5-(beta-hydroxyethyl)thiazole monophosphate (THZ-P) and 2-methyl-4-amino-5-hydroxymethyl pyrimidine pyrophosphate (HMP-PP) to form thiamine monophosphate (TMP). The protein is Thiamine-phosphate synthase of Wolinella succinogenes (strain ATCC 29543 / DSM 1740 / CCUG 13145 / JCM 31913 / LMG 7466 / NCTC 11488 / FDC 602W) (Vibrio succinogenes).